The following is a 121-amino-acid chain: Holo-[acyl-carrier-protein] synthase (121 aa).

The Mg(2+) site is built by Asp8 and Glu58.

Belongs to the P-Pant transferase superfamily. AcpS family. Mg(2+) serves as cofactor.

It is found in the cytoplasm. It catalyses the reaction apo-[ACP] + CoA = holo-[ACP] + adenosine 3',5'-bisphosphate + H(+). Its function is as follows. Transfers the 4'-phosphopantetheine moiety from coenzyme A to a Ser of acyl-carrier-protein. The polypeptide is Holo-[acyl-carrier-protein] synthase (Bacillus velezensis (strain DSM 23117 / BGSC 10A6 / LMG 26770 / FZB42) (Bacillus amyloliquefaciens subsp. plantarum)).